Reading from the N-terminus, the 534-residue chain is Probable DNA polymerase epsilon subunit 2 (534 aa).

Belongs to the DNA polymerase epsilon subunit B family. Consists of four subunits.

Its subcellular location is the nucleus. Functionally, accessory component of the DNA polymerase epsilon complex. Participates in DNA repair and in chromosomal DNA replication. In Caenorhabditis elegans, this protein is Probable DNA polymerase epsilon subunit 2 (pole-2).